Here is a 75-residue protein sequence, read N- to C-terminus: UPF0346 protein LEUM_0763 (75 aa).

Belongs to the UPF0346 family.

In Leuconostoc mesenteroides subsp. mesenteroides (strain ATCC 8293 / DSM 20343 / BCRC 11652 / CCM 1803 / JCM 6124 / NCDO 523 / NBRC 100496 / NCIMB 8023 / NCTC 12954 / NRRL B-1118 / 37Y), this protein is UPF0346 protein LEUM_0763.